The following is a 145-amino-acid chain: Deoxyuridine 5'-triphosphate nucleotidohydrolase (145 aa).

Residues 62–64 (RSG), asparagine 75, 79–81 (TVD), and lysine 89 contribute to the substrate site.

It belongs to the dUTPase family. Mg(2+) is required as a cofactor.

It catalyses the reaction dUTP + H2O = dUMP + diphosphate + H(+). It functions in the pathway pyrimidine metabolism; dUMP biosynthesis; dUMP from dCTP (dUTP route): step 2/2. This enzyme is involved in nucleotide metabolism: it produces dUMP, the immediate precursor of thymidine nucleotides and it decreases the intracellular concentration of dUTP so that uracil cannot be incorporated into DNA. In Helicobacter pylori (strain ATCC 700392 / 26695) (Campylobacter pylori), this protein is Deoxyuridine 5'-triphosphate nucleotidohydrolase.